Consider the following 351-residue polypeptide: L-threonine 3-dehydrogenase (351 aa).

Cysteine 39 is a binding site for Zn(2+). Catalysis depends on charge relay system residues threonine 41 and histidine 44. Residues histidine 64, glutamate 65, cysteine 94, cysteine 97, cysteine 100, and cysteine 108 each contribute to the Zn(2+) site. NAD(+) contacts are provided by residues isoleucine 176, aspartate 196, arginine 201, 271 to 273 (LGI), and 295 to 296 (IY).

Belongs to the zinc-containing alcohol dehydrogenase family. As to quaternary structure, homotetramer. Zn(2+) is required as a cofactor.

The protein resides in the cytoplasm. It catalyses the reaction L-threonine + NAD(+) = (2S)-2-amino-3-oxobutanoate + NADH + H(+). Its pathway is amino-acid degradation; L-threonine degradation via oxydo-reductase pathway; glycine from L-threonine: step 1/2. Its function is as follows. Catalyzes the NAD(+)-dependent oxidation of L-threonine to 2-amino-3-ketobutyrate. The chain is L-threonine 3-dehydrogenase from Francisella tularensis subsp. mediasiatica (strain FSC147).